The chain runs to 530 residues: RNA-binding protein 39 (530 aa).

The interval 1–146 (MADDIDIEAM…PVREPIDNLT (146 aa)) is disordered. N-acetylalanine is present on Ala2. Positions 14-32 (PYKKDENKLSSANGHEERS) are enriched in basic and acidic residues. Composition is skewed to basic residues over residues 33 to 56 (KKRK…KERK) and 64 to 95 (KKSK…RGRY). Tyr95 bears the Phosphotyrosine mark. Phosphoserine is present on residues Ser97 and Ser100. Lys111 participates in a covalent cross-link: Glycyl lysine isopeptide (Lys-Gly) (interchain with G-Cter in SUMO2). Ser117 bears the Phosphoserine mark. Residue Lys119 forms a Glycyl lysine isopeptide (Lys-Gly) (interchain with G-Cter in SUMO2) linkage. A compositionally biased stretch (basic residues) spans 119–130 (KLSRRRSRSKSP). A phosphoserine mark is found at Ser121 and Ser136. Over residues 131–146 (FRKDKSPVREPIDNLT) the composition is skewed to basic and acidic residues. Phosphothreonine is present on Thr146. Positions 153 to 230 (RTVFCMQLAA…VPIIVQASQA (78 aa)) constitute an RRM 1 domain. Residue Lys244 forms a Glycyl lysine isopeptide (Lys-Gly) (interchain with G-Cter in SUMO2) linkage. In terms of domain architecture, RRM 2 spans 250 to 328 (MRLYVGSLHF…RPMKVGHVTE (79 aa)). The tract at residues 291–355 (KGYGFITFSD…RTGIDLGTTG (65 aa)) is activating domain. The interaction with JUN stretch occupies residues 291 to 406 (KGYGFITFSD…IDLQTRLSQQ (116 aa)). A phosphoserine mark is found at Ser334, Ser337, and Ser341. Residues 355–406 (GRLQLMARLAEGTGLQIPPAAQQALQMSGSLAFGAVAEFSFVIDLQTRLSQQ) are interaction with ESR1 and ESR2. Positions 406–530 (QTEASALAAA…ATQLLVPSRR (125 aa)) are interaction with NCOA6. In terms of domain architecture, RRM 3 spans 445-508 (EIKDDVIEEC…KMITAAYVPL (64 aa)).

Belongs to the splicing factor SR family. In terms of assembly, interacts with NCOA6 and JUN. Interacts with ESR1 and ESR2, in the presence of estradiol (E2). Interacts with RSRC1 (via Arg/Ser-rich domain). Interacts with SF3B1. Interacts with ZNF106 (via N-terminus). In terms of processing, aryl sulfonamide anticancer drugs, such as indisulam (E7070) or E7820, promote ubiquitination and subsequent degradation by the DCX(DCAF15) complex. RBM39 degradation results in splicing defects and death in cancer cell lines. Aryl sulfonamide anticancer drugs change the substrate specificity of DCAF15 by acting as a molecular glue that promotes binding between DCAF15 and weak affinity interactor RBM39. As to expression, widely expressed. Highly expressed in pancreas, skeletal muscle, lung and brain. Expressed at intermediate level in kidney, liver and heart.

The protein localises to the nucleus speckle. RNA-binding protein that acts as a pre-mRNA splicing factor. Acts by promoting exon inclusion via regulation of exon cassette splicing. Also acts as a transcriptional coactivator for steroid nuclear receptors ESR1/ER-alpha and ESR2/ER-beta, and JUN/AP-1, independently of the pre-mRNA splicing factor activity. The chain is RNA-binding protein 39 from Homo sapiens (Human).